Reading from the N-terminus, the 352-residue chain is Chorismate synthase (352 aa).

NADP(+)-binding residues include arginine 48 and arginine 54. FMN-binding positions include 125-127 (RSS), 238-239 (NA), glycine 278, 293-297 (KPTSS), and arginine 319.

It belongs to the chorismate synthase family. Homotetramer. It depends on FMNH2 as a cofactor.

The enzyme catalyses 5-O-(1-carboxyvinyl)-3-phosphoshikimate = chorismate + phosphate. Its pathway is metabolic intermediate biosynthesis; chorismate biosynthesis; chorismate from D-erythrose 4-phosphate and phosphoenolpyruvate: step 7/7. Catalyzes the anti-1,4-elimination of the C-3 phosphate and the C-6 proR hydrogen from 5-enolpyruvylshikimate-3-phosphate (EPSP) to yield chorismate, which is the branch point compound that serves as the starting substrate for the three terminal pathways of aromatic amino acid biosynthesis. This reaction introduces a second double bond into the aromatic ring system. The chain is Chorismate synthase from Bordetella petrii (strain ATCC BAA-461 / DSM 12804 / CCUG 43448).